The following is a 229-amino-acid chain: METNFIGDDYGPLFHYQYRLIVIGDSTVGKSSLLRYFTEGKMAEISDPTVGVDFYARMIELRPGYRVKLQLWDTAGQEKFRSITKSYYRNSVGVLAIYDTTNRESFEHVENWVKEAALNLGGPSPSKCVFQLVGTKSDMDSQRQVNYEEGEYFAKYHKMKFIETSSRTGDNVNEAFHMIAQEIQNRVDDGELRPVDGWEGLKTGIMRSQSVCLSERSFPQNSSAGACGC.

73–77 is a GTP binding site; it reads DTAGQ. S-geranylgeranyl cysteine attachment occurs at residues Cys227 and Cys229. Cys229 bears the Cysteine methyl ester mark.

Belongs to the small GTPase superfamily. Rab family. As to quaternary structure, interacts (in GTP-bound form) with Ras association domain-containing protein rsf-1.

The protein localises to the cell membrane. It localises to the cytoplasmic vesicle membrane. Its subcellular location is the golgi apparatus. Its function is as follows. Small GTPases Rab involved in autophagy. The small GTPases Rab are key regulators of intracellular membrane trafficking, from the formation of transport vesicles to their fusion with membranes. Rabs cycle between an inactive GDP-bound form and an active GTP-bound form that is able to recruit to membranes different sets of downstream effectors directly responsible for vesicle formation, movement, tethering and fusion. Involved in positively regulating the oxidative stress response, perhaps in concert with the Ras association domain-containing protein rsf-1. The chain is Ras-related protein rab-39 from Caenorhabditis elegans.